The following is a 470-amino-acid chain: tRNA modification GTPase MnmE (470 aa).

(6S)-5-formyl-5,6,7,8-tetrahydrofolate-binding residues include Arg30, Glu92, and Arg132. Positions 227–393 constitute a TrmE-type G domain; sequence GLQVALVGRP…LIKAVLKTCG (167 aa). Position 237 (Asn237) interacts with K(+). GTP is bound by residues 237 to 242, 256 to 262, 281 to 284, and 342 to 345; these read NVGKSS, TDLPGTT, DTAG, and NKAD. Residue Ser241 participates in Mg(2+) binding. The K(+) site is built by Thr256, Leu258, and Thr261. Thr262 is a Mg(2+) binding site. Position 470 (Lys470) interacts with (6S)-5-formyl-5,6,7,8-tetrahydrofolate.

It belongs to the TRAFAC class TrmE-Era-EngA-EngB-Septin-like GTPase superfamily. TrmE GTPase family. Homodimer. Heterotetramer of two MnmE and two MnmG subunits. Requires K(+) as cofactor.

The protein localises to the cytoplasm. Exhibits a very high intrinsic GTPase hydrolysis rate. Involved in the addition of a carboxymethylaminomethyl (cmnm) group at the wobble position (U34) of certain tRNAs, forming tRNA-cmnm(5)s(2)U34. This Prochlorococcus marinus (strain MIT 9313) protein is tRNA modification GTPase MnmE.